The following is a 405-amino-acid chain: NADH-quinone oxidoreductase subunit D (405 aa).

Belongs to the complex I 49 kDa subunit family. As to quaternary structure, NDH-1 is composed of 14 different subunits. Subunits NuoB, C, D, E, F, and G constitute the peripheral sector of the complex.

The protein localises to the cell inner membrane. The enzyme catalyses a quinone + NADH + 5 H(+)(in) = a quinol + NAD(+) + 4 H(+)(out). Its function is as follows. NDH-1 shuttles electrons from NADH, via FMN and iron-sulfur (Fe-S) centers, to quinones in the respiratory chain. The immediate electron acceptor for the enzyme in this species is believed to be ubiquinone. Couples the redox reaction to proton translocation (for every two electrons transferred, four hydrogen ions are translocated across the cytoplasmic membrane), and thus conserves the redox energy in a proton gradient. The sequence is that of NADH-quinone oxidoreductase subunit D from Leptospira borgpetersenii serovar Hardjo-bovis (strain L550).